The chain runs to 182 residues: Translation initiation factor IF-3 (182 aa).

This sequence belongs to the IF-3 family. In terms of assembly, monomer.

The protein resides in the cytoplasm. In terms of biological role, IF-3 binds to the 30S ribosomal subunit and shifts the equilibrium between 70S ribosomes and their 50S and 30S subunits in favor of the free subunits, thus enhancing the availability of 30S subunits on which protein synthesis initiation begins. The chain is Translation initiation factor IF-3 from Thermosynechococcus vestitus (strain NIES-2133 / IAM M-273 / BP-1).